Here is a 734-residue protein sequence, read N- to C-terminus: Photosystem I P700 chlorophyll a apoprotein A2 (734 aa).

Transmembrane regions (helical) follow at residues 46–69 (IFAS…FHVA), 135–158 (LYTG…LHLQ), 175–199 (LNHH…HVAI), 273–291 (IAHH…GHMY), 330–353 (LHFQ…QHIY), 369–395 (AALY…IFFI), 417–439 (AIIS…LYVH), and 517–535 (FLVH…LILV). Positions 559 and 568 each coordinate [4Fe-4S] cluster. A run of 2 helical transmembrane segments spans residues 575–596 (AFYL…YWHW) and 643–665 (LSVW…MFLI). Residues His-654, Met-662, and Tyr-670 each contribute to the chlorophyll a site. Trp-671 serves as a coordination point for phylloquinone. A helical membrane pass occupies residues 707 to 727 (LVGLAHFSVGYIFTYAAFLIA).

Belongs to the PsaA/PsaB family. As to quaternary structure, the PsaA/B heterodimer binds the P700 chlorophyll special pair and subsequent electron acceptors. PSI consists of a core antenna complex that captures photons, and an electron transfer chain that converts photonic excitation into a charge separation. The eukaryotic PSI reaction center is composed of at least 11 subunits. It depends on P700 is a chlorophyll a/chlorophyll a' dimer, A0 is one or more chlorophyll a, A1 is one or both phylloquinones and FX is a shared 4Fe-4S iron-sulfur center. as a cofactor.

The protein resides in the plastid. It is found in the chloroplast thylakoid membrane. It catalyses the reaction reduced [plastocyanin] + hnu + oxidized [2Fe-2S]-[ferredoxin] = oxidized [plastocyanin] + reduced [2Fe-2S]-[ferredoxin]. PsaA and PsaB bind P700, the primary electron donor of photosystem I (PSI), as well as the electron acceptors A0, A1 and FX. PSI is a plastocyanin-ferredoxin oxidoreductase, converting photonic excitation into a charge separation, which transfers an electron from the donor P700 chlorophyll pair to the spectroscopically characterized acceptors A0, A1, FX, FA and FB in turn. Oxidized P700 is reduced on the lumenal side of the thylakoid membrane by plastocyanin. The protein is Photosystem I P700 chlorophyll a apoprotein A2 of Staurastrum punctulatum (Green alga).